The chain runs to 274 residues: Actin-binding protein Smlt3054 (274 aa).

2 ANK repeats span residues 192–221 (SGNTPLHHAARFGHFSLVTPLVEAGADVAA) and 225–254 (HGWAPLHLAALHKHARACLHLMAHGANPEQ). Residues 251 to 274 (NPEQPGWRGRTPTRMHRHEQTQAL) are disordered.

In terms of assembly, exists as a dimer as well as a higher order oligomer.

The protein localises to the secreted. Its subcellular location is the periplasm. In terms of biological role, directly binds F-actin, which results in thickened and distorted F-actin fibers, and affects cellular F-actin localization. Thus, may be a host effector whose function is to disrupt host actin cytoskeletal structure, which may enhance invasion. In Stenotrophomonas maltophilia (strain K279a), this protein is Actin-binding protein Smlt3054.